A 39-amino-acid chain; its full sequence is Photosystem II reaction center protein J (39 aa).

A helical membrane pass occupies residues 7 to 27; it reads IPLWLIATVGGTAALTVVGLF.

Belongs to the PsbJ family. PSII is composed of 1 copy each of membrane proteins PsbA, PsbB, PsbC, PsbD, PsbE, PsbF, PsbH, PsbI, PsbJ, PsbK, PsbL, PsbM, PsbT, PsbX, PsbY, PsbZ, Psb30/Ycf12, at least 3 peripheral proteins of the oxygen-evolving complex and a large number of cofactors. It forms dimeric complexes.

It localises to the plastid. The protein resides in the chloroplast thylakoid membrane. In terms of biological role, one of the components of the core complex of photosystem II (PSII). PSII is a light-driven water:plastoquinone oxidoreductase that uses light energy to abstract electrons from H(2)O, generating O(2) and a proton gradient subsequently used for ATP formation. It consists of a core antenna complex that captures photons, and an electron transfer chain that converts photonic excitation into a charge separation. This chain is Photosystem II reaction center protein J, found in Rhodomonas salina (Cryptomonas salina).